The following is a 513-amino-acid chain: Histidine ammonia-lyase (513 aa).

The segment at residues alanine 144–glycine 146 is a cross-link (5-imidazolinone (Ala-Gly)). Serine 145 carries the post-translational modification 2,3-didehydroalanine (Ser).

Belongs to the PAL/histidase family. Contains an active site 4-methylidene-imidazol-5-one (MIO), which is formed autocatalytically by cyclization and dehydration of residues Ala-Ser-Gly.

The protein resides in the cytoplasm. It carries out the reaction L-histidine = trans-urocanate + NH4(+). Its pathway is amino-acid degradation; L-histidine degradation into L-glutamate; N-formimidoyl-L-glutamate from L-histidine: step 1/3. The chain is Histidine ammonia-lyase from Streptococcus pyogenes serotype M18 (strain MGAS8232).